The following is a 227-amino-acid chain: Phosphoribosylformylglycinamidine synthase subunit PurQ (227 aa).

The Glutamine amidotransferase type-1 domain occupies Phe-3–Val-225. Cys-86 serves as the catalytic Nucleophile. Active-site residues include His-194 and Glu-196.

As to quaternary structure, part of the FGAM synthase complex composed of 1 PurL, 1 PurQ and 2 PurS subunits.

The protein resides in the cytoplasm. It catalyses the reaction N(2)-formyl-N(1)-(5-phospho-beta-D-ribosyl)glycinamide + L-glutamine + ATP + H2O = 2-formamido-N(1)-(5-O-phospho-beta-D-ribosyl)acetamidine + L-glutamate + ADP + phosphate + H(+). It carries out the reaction L-glutamine + H2O = L-glutamate + NH4(+). It participates in purine metabolism; IMP biosynthesis via de novo pathway; 5-amino-1-(5-phospho-D-ribosyl)imidazole from N(2)-formyl-N(1)-(5-phospho-D-ribosyl)glycinamide: step 1/2. Part of the phosphoribosylformylglycinamidine synthase complex involved in the purines biosynthetic pathway. Catalyzes the ATP-dependent conversion of formylglycinamide ribonucleotide (FGAR) and glutamine to yield formylglycinamidine ribonucleotide (FGAM) and glutamate. The FGAM synthase complex is composed of three subunits. PurQ produces an ammonia molecule by converting glutamine to glutamate. PurL transfers the ammonia molecule to FGAR to form FGAM in an ATP-dependent manner. PurS interacts with PurQ and PurL and is thought to assist in the transfer of the ammonia molecule from PurQ to PurL. This Bacillus cereus (strain 03BB102) protein is Phosphoribosylformylglycinamidine synthase subunit PurQ.